Here is a 210-residue protein sequence, read N- to C-terminus: Protein HEADING DATE REPRESSOR 1 (210 aa).

Residues 1–97 (MEEPASADPP…GKRSSAEMLL (97 aa)) are disordered. A coiled-coil region spans residues 29–49 (QQELNKEAADEQLNNQAHEEA). Composition is skewed to basic and acidic residues over residues 45 to 54 (AHEEAMKIDD) and 62 to 79 (DDVHPDPKANLSEKRKAL). Positions 129-184 (RRIAIQEMNRKDREINGLNEQLEEDSRVLELLQKQLADERKKRTEIEKENSMLHEQ) form a coiled coil.

As to quaternary structure, interacts with OSK3 and OSK4. Mostly expressed in leaves, seedlings and floral organs, and, to a lower extent, in panicle, roots, nodes, internodes, leaf joint and sheath.

Its subcellular location is the nucleus. Functionally, regulates flowering time via a photoperiod-dependent pathway. Suppressor of flowering that upregulates HD1 and down-regulates EHD1 in long days (LD), thus leading to the down-regulation of HD3A and RFT1. Triggers OSK4-mediated HD1 phosphorylation. In Oryza sativa subsp. japonica (Rice), this protein is Protein HEADING DATE REPRESSOR 1.